Reading from the N-terminus, the 429-residue chain is Queuine tRNA-ribosyltransferase accessory subunit 2 (429 aa).

4 residues coordinate Zn(2+): cysteine 330, cysteine 332, cysteine 335, and histidine 361.

The protein belongs to the queuine tRNA-ribosyltransferase family. QTRT2 subfamily. As to quaternary structure, heterodimer of a catalytic subunit and an accessory subunit. It depends on Zn(2+) as a cofactor.

It is found in the cytoplasm. In terms of biological role, non-catalytic subunit of the queuine tRNA-ribosyltransferase (TGT) that catalyzes the base-exchange of a guanine (G) residue with queuine (Q) at position 34 (anticodon wobble position) in tRNAs with GU(N) anticodons (tRNA-Asp, -Asn, -His and -Tyr), resulting in the hypermodified nucleoside queuosine (7-(((4,5-cis-dihydroxy-2-cyclopenten-1-yl)amino)methyl)-7-deazaguanosine). This Culex quinquefasciatus (Southern house mosquito) protein is Queuine tRNA-ribosyltransferase accessory subunit 2.